The following is a 343-amino-acid chain: Allantoicase (343 aa).

The protein belongs to the allantoicase family.

The catalysed reaction is allantoate + H2O = (S)-ureidoglycolate + urea. It participates in nitrogen metabolism; (S)-allantoin degradation; (S)-ureidoglycolate from allantoate (aminidohydrolase route): step 1/1. Its function is as follows. Utilization of purines as secondary nitrogen sources, when primary sources are limiting. The sequence is that of Allantoicase (DAL2) from Saccharomyces cerevisiae (strain ATCC 204508 / S288c) (Baker's yeast).